Consider the following 324-residue polypeptide: UDP-galactose transporter homolog 1 (324 aa).

2 consecutive transmembrane segments (helical) span residues 7 to 27 and 42 to 62; these read LVIA…AQEP and HSSF…LCYL. Residue Asn97 is glycosylated (N-linked (GlcNAc...) asparagine). Transmembrane regions (helical) follow at residues 106-126, 135-155, 161-181, 199-219, 237-257, 265-285, and 290-310; these read VGYM…HVLV, KALV…GGAE, ASLY…LTNA, HLMV…LVLF, ILTY…FVFF, LVLA…SIVV, and VRPV…WETV.

It belongs to the nucleotide-sugar transporter family. SLC35B subfamily.

The protein resides in the endoplasmic reticulum membrane. May be involved in specific transport of UDP-Gal from the cytosol to the Golgi lumen. Involved in the maintenance of optimal conditions for the folding of secretory pathway proteins in the endoplasmic reticulum. This chain is UDP-galactose transporter homolog 1 (HUT1), found in Eremothecium gossypii (strain ATCC 10895 / CBS 109.51 / FGSC 9923 / NRRL Y-1056) (Yeast).